We begin with the raw amino-acid sequence, 271 residues long: Mannosyl-3-phosphoglycerate phosphatase (271 aa).

D13 serves as the catalytic Nucleophile. Mg(2+)-binding residues include D13, D15, and D214.

The protein belongs to the HAD-like hydrolase superfamily. MPGP family. Requires Mg(2+) as cofactor.

It localises to the cytoplasm. The catalysed reaction is 2-O-(alpha-D-mannosyl)-3-phosphoglycerate + H2O = (2R)-2-O-(alpha-D-mannosyl)-glycerate + phosphate. This Escherichia coli O157:H7 protein is Mannosyl-3-phosphoglycerate phosphatase (yedP).